The primary structure comprises 341 residues: Eukaryotic translation initiation factor 3 subunit I (341 aa).

5 WD repeats span residues 8–49, 50–91, 145–184, 189–228, and 286–325; these read GHER…GTYH, GHQG…HTWE, CDES…QLHS, DMGS…VLKT, and GHFG…FDFM.

The protein belongs to the eIF-3 subunit I family. Component of the eukaryotic translation initiation factor 3 (eIF-3) complex.

It localises to the cytoplasm. Its function is as follows. Component of the eukaryotic translation initiation factor 3 (eIF-3) complex, which is involved in protein synthesis of a specialized repertoire of mRNAs and, together with other initiation factors, stimulates binding of mRNA and methionyl-tRNAi to the 40S ribosome. The eIF-3 complex specifically targets and initiates translation of a subset of mRNAs involved in cell proliferation. This Pyricularia oryzae (strain 70-15 / ATCC MYA-4617 / FGSC 8958) (Rice blast fungus) protein is Eukaryotic translation initiation factor 3 subunit I.